Reading from the N-terminus, the 349-residue chain is tRNA pseudouridine synthase D (349 aa).

A substrate-binding site is contributed by Phe27. Catalysis depends on Asp80, which acts as the Nucleophile. Asn129 serves as a coordination point for substrate. One can recognise a TRUD domain in the interval Gly155 to Leu303. Phe329 provides a ligand contact to substrate.

This sequence belongs to the pseudouridine synthase TruD family.

The enzyme catalyses uridine(13) in tRNA = pseudouridine(13) in tRNA. In terms of biological role, responsible for synthesis of pseudouridine from uracil-13 in transfer RNAs. This Escherichia coli O81 (strain ED1a) protein is tRNA pseudouridine synthase D.